Reading from the N-terminus, the 301-residue chain is Protoheme IX farnesyltransferase (301 aa).

9 helical membrane-spanning segments follow: residues 20 to 42 (FTELVKIGIVNSNTITAFTGMWL), 55 to 75 (VDVIFFTIVGSALIVAASGAF), 105 to 125 (ALMVALVLGVVGTIMLFMTTW), 126 to 146 (QAGVLGVIGVFLYVVVYSLYA), 150 to 172 (LVSNTVIGSFSGAVPPLIGWFAV), 176 to 198 (FSIVPIMLFLVMFCWQPPHFYAI), 227 to 247 (MFFWVILLTILPFFMFELGIV), 249 to 269 (VVLATLLNIGWLALSIYGFKM), and 280 to 300 (FVYSLNYMTILFVAMVVISIF).

This sequence belongs to the UbiA prenyltransferase family. Protoheme IX farnesyltransferase subfamily. Interacts with CtaA.

Its subcellular location is the cell membrane. It carries out the reaction heme b + (2E,6E)-farnesyl diphosphate + H2O = Fe(II)-heme o + diphosphate. It functions in the pathway porphyrin-containing compound metabolism; heme O biosynthesis; heme O from protoheme: step 1/1. Functionally, converts heme B (protoheme IX) to heme O by substitution of the vinyl group on carbon 2 of heme B porphyrin ring with a hydroxyethyl farnesyl side group. The protein is Protoheme IX farnesyltransferase of Listeria monocytogenes serotype 4b (strain CLIP80459).